Consider the following 237-residue polypeptide: UPF0173 metal-dependent hydrolase BCAN_B0597 (237 aa).

It belongs to the UPF0173 family.

The sequence is that of UPF0173 metal-dependent hydrolase BCAN_B0597 from Brucella canis (strain ATCC 23365 / NCTC 10854 / RM-666).